A 201-amino-acid chain; its full sequence is Receptor expression-enhancing protein 1 (201 aa).

A run of 2 helical transmembrane segments spans residues 1–21 (MVSW…YPAY) and 35–55 (YVKW…ETFT). The residue at position 152 (Ser152) is a Phosphoserine. A disordered region spans residues 158 to 201 (TIRGDGAPAPSGPPPPGTGRSSGKHSQPKMSRSASESAGSSGTA). Residues 188–201 (SRSASESAGSSGTA) show a composition bias toward low complexity.

Belongs to the DP1 family. In terms of assembly, interacts with OLFR992. Interacts with SPAST and ATL1. Interacts (via C-terminus) with microtubules. Interacts with ZFYVE27. As to expression, detected in olfactory sensory neurons of the olfactory epithelium, and in total brain.

It localises to the membrane. Its subcellular location is the mitochondrion membrane. It is found in the endoplasmic reticulum. Functionally, required for endoplasmic reticulum (ER) network formation, shaping and remodeling; it links ER tubules to the cytoskeleton. May also enhance the cell surface expression of odorant receptors. In Mus musculus (Mouse), this protein is Receptor expression-enhancing protein 1 (Reep1).